The sequence spans 346 residues: SUMO-activating enzyme subunit 1 (346 aa).

M1 is subject to N-acetylmethionine. At V2 the chain carries N-acetylvaline; in SUMO-activating enzyme subunit 1, N-terminally processed. Residue S12 is modified to Phosphoserine. K198 is subject to N6-acetyllysine.

The protein belongs to the ubiquitin-activating E1 family. Heterodimer of SAE1 and UBA2/SAE2. The heterodimer corresponds to the two domains that are encoded on a single polypeptide chain in ubiquitin-activating enzyme E1. Interacts with UBE2I. As to expression, expression level increases during S phase and drops in G2 phase (at protein level).

It is found in the nucleus. Its pathway is protein modification; protein sumoylation. In terms of biological role, the heterodimer acts as an E1 ligase for SUMO1, SUMO2, SUMO3, and probably SUMO4. It mediates ATP-dependent activation of SUMO proteins followed by formation of a thioester bond between a SUMO protein and a conserved active site cysteine residue on UBA2/SAE2. In Homo sapiens (Human), this protein is SUMO-activating enzyme subunit 1 (SAE1).